A 302-amino-acid polypeptide reads, in one-letter code: Methionyl-tRNA formyltransferase (302 aa).

108-111 (SLLP) contributes to the (6S)-5,6,7,8-tetrahydrofolate binding site. A compositionally biased stretch (basic and acidic residues) spans 276–288 (REGKRPMEPEEFL). The disordered stretch occupies residues 276–302 (REGKRPMEPEEFLRGFPLPEGSRAHTA).

It belongs to the Fmt family.

It catalyses the reaction L-methionyl-tRNA(fMet) + (6R)-10-formyltetrahydrofolate = N-formyl-L-methionyl-tRNA(fMet) + (6S)-5,6,7,8-tetrahydrofolate + H(+). Its function is as follows. Attaches a formyl group to the free amino group of methionyl-tRNA(fMet). The formyl group appears to play a dual role in the initiator identity of N-formylmethionyl-tRNA by promoting its recognition by IF2 and preventing the misappropriation of this tRNA by the elongation apparatus. The protein is Methionyl-tRNA formyltransferase of Cereibacter sphaeroides (strain KD131 / KCTC 12085) (Rhodobacter sphaeroides).